A 195-amino-acid polypeptide reads, in one-letter code: UMP-CMP kinase (195 aa).

17–22 (GSGKGT) is a binding site for ATP. Residues 37 to 66 (SAGDLLRQEQQSGSKDGEMIATMIKNGEIV) form an NMP region. Residues R43, 64–66 (EIV), and 91–94 (GFPR) each bind a ribonucleoside 5'-phosphate. N98 contributes to the CMP binding site. An LID region spans residues 131–141 (KRGESSGRSDD). R132 lines the ATP pocket. Positions 138 and 149 each coordinate a ribonucleoside 5'-phosphate. R177 lines the ATP pocket.

Belongs to the adenylate kinase family. UMP-CMP kinase subfamily. In terms of assembly, monomer. Mg(2+) is required as a cofactor.

The protein resides in the cytoplasm. Its subcellular location is the nucleus. It carries out the reaction CMP + ATP = CDP + ADP. The enzyme catalyses dCMP + ATP = dCDP + ADP. The catalysed reaction is UMP + ATP = UDP + ADP. In terms of biological role, catalyzes the phosphorylation of pyrimidine nucleoside monophosphates at the expense of ATP. Plays an important role in de novo pyrimidine nucleotide biosynthesis. Has preference for UMP and CMP as phosphate acceptors. The chain is UMP-CMP kinase from Dictyostelium discoideum (Social amoeba).